The primary structure comprises 130 residues: Small ribosomal subunit protein uS9 (130 aa).

Positions 104–130 are disordered; sequence LTRDPRMKERRKYGLKKARKAPQFSKR. Basic residues predominate over residues 111-130; it reads KERRKYGLKKARKAPQFSKR.

Belongs to the universal ribosomal protein uS9 family.

This chain is Small ribosomal subunit protein uS9, found in Moorella thermoacetica (strain ATCC 39073 / JCM 9320).